The following is a 264-amino-acid chain: MSMAFENVDYTSLDIPAAPFSDPARIPDFPKNKVPRHIGVIMDGNGRWAKQRGMVRTNGHQAAEPVVFDTIAGAIEAGVRYLSLYTFSTENWKRSPQEVRFLMGFSREIIHRRVEQMDEWGVRVRWSGRRPKLWKSVIDELEAAEERTKNNKVIDVVFCINYGGRAEIADACAAIAREVRDGKISGDRVTEKMIADHLYNPDIPDCDLVIRTSGEQRTSNFLPWEAAYAELDFVPELFPDCGRDVLWRSIDHYIHRDRRFGGVK.

Asp43 is a catalytic residue. Residue Asp43 participates in Mg(2+) binding. Substrate-binding positions include 44 to 47 (GNGR), Trp48, Arg56, His60, and 88 to 90 (STE). Asn91 (proton acceptor) is an active-site residue. Residues Trp92, Arg94, Arg211, and 217 to 219 (RTS) each bind substrate. Glu230 contacts Mg(2+).

Belongs to the UPP synthase family. As to quaternary structure, homodimer. Mg(2+) is required as a cofactor.

Catalyzes the condensation of isopentenyl diphosphate (IPP) with allylic pyrophosphates generating different type of terpenoids. The sequence is that of Isoprenyl transferase from Bifidobacterium longum (strain NCC 2705).